Here is a 306-residue protein sequence, read N- to C-terminus: Pantothenate kinase (306 aa).

90–97 serves as a coordination point for ATP; sequence GSVAVGKS.

The protein belongs to the prokaryotic pantothenate kinase family.

It is found in the cytoplasm. The enzyme catalyses (R)-pantothenate + ATP = (R)-4'-phosphopantothenate + ADP + H(+). The protein operates within cofactor biosynthesis; coenzyme A biosynthesis; CoA from (R)-pantothenate: step 1/5. This is Pantothenate kinase from Lactococcus lactis subsp. cremoris (strain SK11).